Consider the following 171-residue polypeptide: Co-chaperone protein HscB (171 aa).

In terms of domain architecture, J spans 2–74 (DYFTLFGLPA…LMRAEYLLSL (73 aa)).

Belongs to the HscB family. As to quaternary structure, interacts with HscA and stimulates its ATPase activity. Interacts with IscU.

In terms of biological role, co-chaperone involved in the maturation of iron-sulfur cluster-containing proteins. Seems to help targeting proteins to be folded toward HscA. The sequence is that of Co-chaperone protein HscB from Escherichia coli (strain SMS-3-5 / SECEC).